The following is a 76-amino-acid chain: DNA-directed RNA polymerase subunit epsilon (76 aa).

Belongs to the RNA polymerase subunit epsilon family. In terms of assembly, RNAP is composed of a core of 2 alpha, a beta and a beta' subunit. The core is associated with a delta subunit, and at least one of epsilon or omega. When a sigma factor is associated with the core the holoenzyme is formed, which can initiate transcription.

The enzyme catalyses RNA(n) + a ribonucleoside 5'-triphosphate = RNA(n+1) + diphosphate. In terms of biological role, a non-essential component of RNA polymerase (RNAP). The polypeptide is DNA-directed RNA polymerase subunit epsilon (Streptococcus gordonii (strain Challis / ATCC 35105 / BCRC 15272 / CH1 / DL1 / V288)).